The primary structure comprises 320 residues: MKSIIFMGTPEFSAPILQSLIDEPNYDVIGVVTQPDRKVGRKHVLTPSPVKKVAVKNDIKVYQPEKLSGSAELTELIALNADLIVTAAFGQFLPMSLINSVKIGAVNVHASLLPKYRGGAPVHYAIMNGDKETGVTIIYMVKKMDAGEMLATAKIPITDQDDVGTMFEKLSLLGRDLLLDTLPQLIEGNVQPVKQDEEQVSFSPNISPEEEEIDINLPARLVDAKVRGLRPFPVAYFMMEGKRTKIWKTKVIDQTTDLKPGQVVSKTKHELLVATGEHGVISIEELQPAGKQKMTITDYLNGVGENLHPGKQIIDNDKSK.

111–114 (SLLP) provides a ligand contact to (6S)-5,6,7,8-tetrahydrofolate.

The protein belongs to the Fmt family.

It catalyses the reaction L-methionyl-tRNA(fMet) + (6R)-10-formyltetrahydrofolate = N-formyl-L-methionyl-tRNA(fMet) + (6S)-5,6,7,8-tetrahydrofolate + H(+). In terms of biological role, attaches a formyl group to the free amino group of methionyl-tRNA(fMet). The formyl group appears to play a dual role in the initiator identity of N-formylmethionyl-tRNA by promoting its recognition by IF2 and preventing the misappropriation of this tRNA by the elongation apparatus. This chain is Methionyl-tRNA formyltransferase, found in Pediococcus pentosaceus (strain ATCC 25745 / CCUG 21536 / LMG 10740 / 183-1w).